The sequence spans 273 residues: UPF0173 metal-dependent hydrolase Bpro_4324 (273 aa).

It belongs to the UPF0173 family.

The chain is UPF0173 metal-dependent hydrolase Bpro_4324 from Polaromonas sp. (strain JS666 / ATCC BAA-500).